The primary structure comprises 149 residues: Nucleoside diphosphate kinase (149 aa).

The ATP site is built by K9, F57, R85, T91, R102, and N112. H115 acts as the Pros-phosphohistidine intermediate in catalysis.

It belongs to the NDK family. Homotetramer. Mg(2+) is required as a cofactor.

It is found in the cytoplasm. The catalysed reaction is a 2'-deoxyribonucleoside 5'-diphosphate + ATP = a 2'-deoxyribonucleoside 5'-triphosphate + ADP. It catalyses the reaction a ribonucleoside 5'-diphosphate + ATP = a ribonucleoside 5'-triphosphate + ADP. In terms of biological role, major role in the synthesis of nucleoside triphosphates other than ATP. The ATP gamma phosphate is transferred to the NDP beta phosphate via a ping-pong mechanism, using a phosphorylated active-site intermediate. This chain is Nucleoside diphosphate kinase, found in Crocosphaera subtropica (strain ATCC 51142 / BH68) (Cyanothece sp. (strain ATCC 51142)).